The primary structure comprises 221 residues: N-acetyltransferase 8F1 (221 aa).

A helical transmembrane segment spans residues 53–73 (LVLVSGSWLLAVVCIFFLLLL). The N-acetyltransferase domain maps to 69–219 (FLLLLLRFLA…RTIQLKYPFP (151 aa)).

This sequence belongs to the camello family.

The protein localises to the membrane. In terms of biological role, may play a role in regulation of gastrulation. The chain is N-acetyltransferase 8F1 from Rattus norvegicus (Rat).